A 683-amino-acid chain; its full sequence is Eukaryotic translation initiation factor 3 subunit B (683 aa).

The interval 1-25 (MAKKKGEEQDFEEEPNFDDPEGFVD) is disordered. The segment covering 9–25 (QDFEEEPNFDDPEGFVD) has biased composition (acidic residues). Residues 49 to 133 (NVIVVDNIPV…YTLLVNRFAD (85 aa)) enclose the RRM domain. WD repeat units lie at residues 199-238 (KRER…KVNK), 240-279 (AHSN…EKRT), 283-321 (DGMS…LLDM), 324-359 (IRVE…TLMA), 435-477 (EVKE…EPVL), and 522-567 (GDHY…KRVN). Positions 611-638 (MTRASKELIEKRAKLREQFTEYRSKRVK) form a coiled coil.

Belongs to the eIF-3 subunit B family. In terms of assembly, component of the eukaryotic translation initiation factor 3 (eIF-3) complex.

The protein resides in the cytoplasm. Its function is as follows. RNA-binding component of the eukaryotic translation initiation factor 3 (eIF-3) complex, which is involved in protein synthesis of a specialized repertoire of mRNAs and, together with other initiation factors, stimulates binding of mRNA and methionyl-tRNAi to the 40S ribosome. The eIF-3 complex specifically targets and initiates translation of a subset of mRNAs involved in cell proliferation. In Anopheles gambiae (African malaria mosquito), this protein is Eukaryotic translation initiation factor 3 subunit B.